The sequence spans 94 residues: Co-chaperonin GroES (94 aa).

Belongs to the GroES chaperonin family. As to quaternary structure, heptamer of 7 subunits arranged in a ring. Interacts with the chaperonin GroEL.

Its subcellular location is the cytoplasm. In terms of biological role, together with the chaperonin GroEL, plays an essential role in assisting protein folding. The GroEL-GroES system forms a nano-cage that allows encapsulation of the non-native substrate proteins and provides a physical environment optimized to promote and accelerate protein folding. GroES binds to the apical surface of the GroEL ring, thereby capping the opening of the GroEL channel. This Shouchella clausii (strain KSM-K16) (Alkalihalobacillus clausii) protein is Co-chaperonin GroES.